Here is a 217-residue protein sequence, read N- to C-terminus: Protein-L-isoaspartate O-methyltransferase (217 aa).

Serine 64 is an active-site residue.

Belongs to the methyltransferase superfamily. L-isoaspartyl/D-aspartyl protein methyltransferase family.

The protein localises to the cytoplasm. It carries out the reaction [protein]-L-isoaspartate + S-adenosyl-L-methionine = [protein]-L-isoaspartate alpha-methyl ester + S-adenosyl-L-homocysteine. Catalyzes the methyl esterification of L-isoaspartyl residues in peptides and proteins that result from spontaneous decomposition of normal L-aspartyl and L-asparaginyl residues. It plays a role in the repair and/or degradation of damaged proteins. The sequence is that of Protein-L-isoaspartate O-methyltransferase from Nitrobacter winogradskyi (strain ATCC 25391 / DSM 10237 / CIP 104748 / NCIMB 11846 / Nb-255).